The sequence spans 359 residues: 3-dehydroquinate synthase (359 aa).

Residues 69–74, 103–107, 127–128, Lys140, Lys149, and 167–170 each bind NAD(+); these read DGEAHK, GVIGD, TT, and TLDT. Zn(2+)-binding residues include Glu182, His245, and His262.

It belongs to the sugar phosphate cyclases superfamily. Dehydroquinate synthase family. Requires Co(2+) as cofactor. Zn(2+) serves as cofactor. The cofactor is NAD(+).

Its subcellular location is the cytoplasm. It carries out the reaction 7-phospho-2-dehydro-3-deoxy-D-arabino-heptonate = 3-dehydroquinate + phosphate. The protein operates within metabolic intermediate biosynthesis; chorismate biosynthesis; chorismate from D-erythrose 4-phosphate and phosphoenolpyruvate: step 2/7. Its function is as follows. Catalyzes the conversion of 3-deoxy-D-arabino-heptulosonate 7-phosphate (DAHP) to dehydroquinate (DHQ). The sequence is that of 3-dehydroquinate synthase from Methylococcus capsulatus (strain ATCC 33009 / NCIMB 11132 / Bath).